Here is a 137-residue protein sequence, read N- to C-terminus: L-ectoine synthase (137 aa).

The interval Glu-115–Asp-137 is disordered.

The protein belongs to the ectoine synthase family.

It carries out the reaction (2S)-4-acetamido-2-aminobutanoate = L-ectoine + H2O. It participates in amine and polyamine biosynthesis; ectoine biosynthesis; L-ectoine from L-aspartate 4-semialdehyde: step 3/3. In terms of biological role, catalyzes the circularization of gamma-N-acetyl-alpha,gamma-diaminobutyric acid (ADABA) to ectoine (1,4,5,6-tetrahydro-2-methyl-4-pyrimidine carboxylic acid), which is an excellent osmoprotectant. The chain is L-ectoine synthase from Sphingopyxis alaskensis (strain DSM 13593 / LMG 18877 / RB2256) (Sphingomonas alaskensis).